The chain runs to 40 residues: uncharacterized protein (40 aa).

This is an uncharacterized protein from Saccharomyces cerevisiae (strain ATCC 204508 / S288c) (Baker's yeast).